A 283-amino-acid polypeptide reads, in one-letter code: Pantothenate synthetase (283 aa).

Residue 30–37 (MGNLHDAH) participates in ATP binding. Histidine 37 acts as the Proton donor in catalysis. Residue glutamine 61 coordinates (R)-pantoate. Glutamine 61 lines the beta-alanine pocket. 149–152 (GVKD) is a binding site for ATP. Glutamine 155 is a binding site for (R)-pantoate. ATP is bound by residues valine 178 and 186–189 (MSSR).

Belongs to the pantothenate synthetase family. In terms of assembly, homodimer.

The protein resides in the cytoplasm. The enzyme catalyses (R)-pantoate + beta-alanine + ATP = (R)-pantothenate + AMP + diphosphate + H(+). The protein operates within cofactor biosynthesis; (R)-pantothenate biosynthesis; (R)-pantothenate from (R)-pantoate and beta-alanine: step 1/1. In terms of biological role, catalyzes the condensation of pantoate with beta-alanine in an ATP-dependent reaction via a pantoyl-adenylate intermediate. This Cellvibrio japonicus (strain Ueda107) (Pseudomonas fluorescens subsp. cellulosa) protein is Pantothenate synthetase.